The sequence spans 157 residues: Probable succinate transporter subunit YjjB (157 aa).

4 helical membrane-spanning segments follow: residues L8–F28, M50–V70, V87–I107, and F129–W149.

This sequence belongs to the ThrE exporter (TC 2.A.79) family. In terms of assembly, the transporter is composed of YjjB and YjjP.

The protein resides in the cell inner membrane. Functionally, involved in succinate export with YjjP. Both proteins are required for export. The chain is Probable succinate transporter subunit YjjB from Escherichia coli O127:H6 (strain E2348/69 / EPEC).